We begin with the raw amino-acid sequence, 450 residues long: Solute carrier family 52, riboflavin transporter, member 2 (450 aa).

5 helical membrane passes run 14–34 (LLVA…WVEL), 47–67 (LPSY…LVTL), 79–99 (IPIQ…APLW), 114–136 (FLTL…LPFL), and 147–167 (FFLG…AQGV). A glycan (N-linked (GlcNAc...) asparagine) is linked at N178. The chain crosses the membrane as a helical span at residues 201 to 221 (FFWVLTALLGTSAAAFQGLLL). The tract at residues 230–268 (ATMGTGLRVETPGTEEEEEEEEASPLQEPPGQVASIVSS) is disordered. Residues 242 to 252 (GTEEEEEEEEA) show a composition bias toward acidic residues. Helical transmembrane passes span 282-302 (ACLL…LPAV), 317-337 (LAVV…MAVL), 344-364 (LYGL…LAVL), 371-391 (VGTS…AGVF), and 409-429 (ALLA…IAMF).

This sequence belongs to the riboflavin transporter family. As to expression, highly expressed in the placenta and small intestine, moderately in the kidney, colon, lung, prostate, uterus, and thymus, and weakly in all other tissues.

Its subcellular location is the cell membrane. It carries out the reaction riboflavin(in) = riboflavin(out). Its activity is regulated as follows. Riboflavin transport is Na(+)-independent but moderately pH-sensitive. Activity is strongly inhibited by riboflavin analogs, such as lumiflavin. Weakly inhibited by flavin adenine dinucleotide (FAD) and flavin mononucleotide (FMN). Functionally, plasma membrane transporter mediating the uptake by cells of the water soluble vitamin B2/riboflavin that plays a key role in biochemical oxidation-reduction reactions of the carbohydrate, lipid, and amino acid metabolism. May also act as a receptor for 4-hydroxybutyrate. The protein is Solute carrier family 52, riboflavin transporter, member 2 (Slc52a2) of Rattus norvegicus (Rat).